The primary structure comprises 103 residues: Co-chaperonin GroES (103 aa).

This sequence belongs to the GroES chaperonin family. Heptamer of 7 subunits arranged in a ring. Interacts with the chaperonin GroEL.

The protein localises to the cytoplasm. In terms of biological role, together with the chaperonin GroEL, plays an essential role in assisting protein folding. The GroEL-GroES system forms a nano-cage that allows encapsulation of the non-native substrate proteins and provides a physical environment optimized to promote and accelerate protein folding. GroES binds to the apical surface of the GroEL ring, thereby capping the opening of the GroEL channel. The polypeptide is Co-chaperonin GroES (Parasynechococcus marenigrum (strain WH8102)).